The chain runs to 107 residues: Large ribosomal subunit protein uL24 (107 aa).

It belongs to the universal ribosomal protein uL24 family. In terms of assembly, part of the 50S ribosomal subunit.

One of two assembly initiator proteins, it binds directly to the 5'-end of the 23S rRNA, where it nucleates assembly of the 50S subunit. Its function is as follows. One of the proteins that surrounds the polypeptide exit tunnel on the outside of the subunit. In Caldanaerobacter subterraneus subsp. tengcongensis (strain DSM 15242 / JCM 11007 / NBRC 100824 / MB4) (Thermoanaerobacter tengcongensis), this protein is Large ribosomal subunit protein uL24.